Here is a 313-residue protein sequence, read N- to C-terminus: Porphobilinogen deaminase (313 aa).

Cys241 carries the post-translational modification S-(dipyrrolylmethanemethyl)cysteine.

Belongs to the HMBS family. Monomer. Dipyrromethane is required as a cofactor.

The enzyme catalyses 4 porphobilinogen + H2O = hydroxymethylbilane + 4 NH4(+). Its pathway is porphyrin-containing compound metabolism; protoporphyrin-IX biosynthesis; coproporphyrinogen-III from 5-aminolevulinate: step 2/4. The protein operates within porphyrin-containing compound metabolism; chlorophyll biosynthesis. Tetrapolymerization of the monopyrrole PBG into the hydroxymethylbilane pre-uroporphyrinogen in several discrete steps. This chain is Porphobilinogen deaminase, found in Chlorobium phaeobacteroides (strain DSM 266 / SMG 266 / 2430).